A 220-amino-acid chain; its full sequence is Probable chemoreceptor glutamine deamidase CheD 2 (220 aa).

Belongs to the CheD family.

The enzyme catalyses L-glutaminyl-[protein] + H2O = L-glutamyl-[protein] + NH4(+). Its function is as follows. Probably deamidates glutamine residues to glutamate on methyl-accepting chemotaxis receptors (MCPs), playing an important role in chemotaxis. In Methanosarcina acetivorans (strain ATCC 35395 / DSM 2834 / JCM 12185 / C2A), this protein is Probable chemoreceptor glutamine deamidase CheD 2.